Consider the following 394-residue polypeptide: DNA replication and repair protein RecF (394 aa).

30–37 (GRNGFGKT) contacts ATP.

Belongs to the RecF family.

The protein resides in the cytoplasm. Its function is as follows. The RecF protein is involved in DNA metabolism; it is required for DNA replication and normal SOS inducibility. RecF binds preferentially to single-stranded, linear DNA. It also seems to bind ATP. The protein is DNA replication and repair protein RecF of Corynebacterium glutamicum (strain ATCC 13032 / DSM 20300 / JCM 1318 / BCRC 11384 / CCUG 27702 / LMG 3730 / NBRC 12168 / NCIMB 10025 / NRRL B-2784 / 534).